A 100-amino-acid polypeptide reads, in one-letter code: Small ribosomal subunit protein uS14c (100 aa).

This sequence belongs to the universal ribosomal protein uS14 family. As to quaternary structure, part of the 30S ribosomal subunit.

It is found in the plastid. The protein localises to the chloroplast. In terms of biological role, binds 16S rRNA, required for the assembly of 30S particles. This is Small ribosomal subunit protein uS14c from Lobularia maritima (Sweet alyssum).